Consider the following 465-residue polypeptide: Ribulose bisphosphate carboxylase large chain (465 aa).

Lys-4 bears the N6,N6,N6-trimethyllysine mark. Thr-163 is a binding site for substrate. Lys-165 serves as the catalytic Proton acceptor. Lys-167 lines the substrate pocket. Mg(2+) contacts are provided by Lys-191, Asp-193, and Glu-194. Residue Lys-191 is modified to N6-carboxylysine. Catalysis depends on His-284, which acts as the Proton acceptor. Arg-285, His-317, and Ser-369 together coordinate substrate.

It belongs to the RuBisCO large chain family. Type I subfamily. Heterohexadecamer of 8 large chains and 8 small chains; disulfide-linked. The disulfide link is formed within the large subunit homodimers. It depends on Mg(2+) as a cofactor. In terms of processing, the disulfide bond which can form in the large chain dimeric partners within the hexadecamer appears to be associated with oxidative stress and protein turnover.

The protein resides in the plastid. It localises to the chloroplast. It carries out the reaction 2 (2R)-3-phosphoglycerate + 2 H(+) = D-ribulose 1,5-bisphosphate + CO2 + H2O. The catalysed reaction is D-ribulose 1,5-bisphosphate + O2 = 2-phosphoglycolate + (2R)-3-phosphoglycerate + 2 H(+). In terms of biological role, ruBisCO catalyzes two reactions: the carboxylation of D-ribulose 1,5-bisphosphate, the primary event in carbon dioxide fixation, as well as the oxidative fragmentation of the pentose substrate in the photorespiration process. Both reactions occur simultaneously and in competition at the same active site. In Trochodendron aralioides (Wheel tree), this protein is Ribulose bisphosphate carboxylase large chain.